The chain runs to 597 residues: Indole-3-acetic acid-amido synthetase GH3.4 (597 aa).

Belongs to the IAA-amido conjugating enzyme family.

In terms of biological role, catalyzes the synthesis of indole-3-acetic acid (IAA)-amino acid conjugates, providing a mechanism for the plant to cope with the presence of excess auxin. Strongly reactive with Glu, Gln, Trp, Asp, Ala, Leu, Phe, Gly, Tyr, Met, Ile and Val. Little or no product formation with His, Ser, Thr, Arg, Lys, or Cys. Also active on pyruvic and butyric acid analogs of IAA, PAA and the synthetic auxin naphthaleneacetic acid (NAA). The two chlorinated synthetic auxin herbicides 2,4-D and 3,6-dichloro-o-anisic acid (dicamba) cannot be used as substrates. The sequence is that of Indole-3-acetic acid-amido synthetase GH3.4 (GH3.4) from Arabidopsis thaliana (Mouse-ear cress).